The chain runs to 430 residues: Asparagine--tRNA ligase (430 aa).

The protein belongs to the class-II aminoacyl-tRNA synthetase family.

The protein localises to the cytoplasm. The catalysed reaction is tRNA(Asn) + L-asparagine + ATP = L-asparaginyl-tRNA(Asn) + AMP + diphosphate + H(+). The sequence is that of Asparagine--tRNA ligase from Thermococcus gammatolerans (strain DSM 15229 / JCM 11827 / EJ3).